A 318-amino-acid chain; its full sequence is Ankyrin repeat and SOCS box protein 7 (318 aa).

ANK repeat units follow at residues 13 to 42 (QEEL…SPNG), 46 to 75 (NGWT…DPTV), 80 to 109 (GGFT…RSDI), 116 to 145 (DGWT…EVDP), 149 to 178 (KGTT…NIDI), 180 to 208 (NGFL…DTNL), and 213 to 242 (DGQT…DTNT). Positions 265-318 (LDFLQEVTRQPRNLQDLCRIKIRQCIGLQNLKLLDELPIAKVMKDYLKHKFDDI) constitute an SOCS box domain.

This sequence belongs to the ankyrin SOCS box (ASB) family. In terms of assembly, interacts with CUL5. Interacts with RNF7. Interacts with PSRC1.

It functions in the pathway protein modification; protein ubiquitination. Probable substrate-recognition component of a SCF-like ECS (Elongin-Cullin-SOCS-box protein) E3 ubiquitin-protein ligase complex which mediates the ubiquitination and subsequent proteasomal degradation of target proteins. Plays a role in spindle dynamics and genome integrity by targeting the mitotic progression protein PSRC1 for proteasomal degradation in a cell cycle-dependent manner. Also participates in meiosis by mediating the proper attachment between kinetochores and microtubules. The protein is Ankyrin repeat and SOCS box protein 7 (ASB7) of Homo sapiens (Human).